Here is a 1001-residue protein sequence, read N- to C-terminus: DNA topoisomerase 3-alpha (1001 aa).

Positions 35–179 (KVLCVAEKND…NLQVLRARFS (145 aa)) constitute a Toprim domain. The Topo IA-type catalytic domain occupies 197–617 (DQRVSDAVDV…QQVQKYKQVF (421 aa)). Catalysis depends on Tyr-362, which acts as the O-(5'-phospho-DNA)-tyrosine intermediate. The segment at 400–424 (GGPTPRNGNKSDQAHPPIHPTKYTN) is disordered. The segment at 658-685 (CPQCNKDMVLKTKKNGGFYLSCMGFPEC) adopts a C4-type zinc-finger fold. A compositionally biased stretch (polar residues) spans 774–792 (RMDNSQHPQPADSRQTGSS). Positions 774–810 (RMDNSQHPQPADSRQTGSSKALAQTLPPPTAAGESNS) are disordered. Cys-813, Cys-815, Cys-838, Cys-843, Cys-897, Cys-899, Cys-922, and Cys-930 together coordinate Zn(2+). 2 consecutive GRF-type zinc fingers follow at residues 813-852 (CNCG…ADSP) and 897-939 (CLCS…VDEN). Positions 937 to 1001 (DENTAPGTSG…HTRPFCPQNR (65 aa)) are disordered. Residues 953–964 (DRGRTLESEARS) show a composition bias toward basic and acidic residues.

It belongs to the type IA topoisomerase family. In terms of assembly, binds ssDNA. Interacts (via N-terminal region) with BLM; the interaction is direct. Directly interacts with RMI1. Component of the RMI complex, containing at least TOP3A, RMI1 and RMI2. The RMI complex interacts with BLM. The cofactor is Mg(2+). High expression is found in testis, heart, skeletal muscle and pancreas.

The protein resides in the mitochondrion matrix. The catalysed reaction is ATP-independent breakage of single-stranded DNA, followed by passage and rejoining.. Functionally, releases the supercoiling and torsional tension of DNA introduced during the DNA replication and transcription by transiently cleaving and rejoining one strand of the DNA duplex. Introduces a single-strand break via transesterification at a target site in duplex DNA. The scissile phosphodiester is attacked by the catalytic tyrosine of the enzyme, resulting in the formation of a DNA-(5'-phosphotyrosyl)-enzyme intermediate and the expulsion of a 3'-OH DNA strand. The free DNA strand then undergoes passage around the unbroken strand thus removing DNA supercoils. Finally, in the religation step, the DNA 3'-OH attacks the covalent intermediate to expel the active-site tyrosine and restore the DNA phosphodiester backbone. As an essential component of the RMI complex it is involved in chromosome separation and the processing of homologous recombination intermediates to limit DNA crossover formation in cells. Has DNA decatenation activity. It is required for mtDNA decatenation and segregation after completion of replication, in a process that does not require BLM, RMI1 and RMI2. This chain is DNA topoisomerase 3-alpha (TOP3A), found in Homo sapiens (Human).